A 254-amino-acid chain; its full sequence is Ribosomal RNA small subunit methyltransferase G (254 aa).

Residues glycine 84, phenylalanine 89, 136-137 (VE), and arginine 155 contribute to the S-adenosyl-L-methionine site. Positions 231–254 (HLYPRAVGIPSKQPLGIQADDNRS) are disordered.

Belongs to the methyltransferase superfamily. RNA methyltransferase RsmG family.

Its subcellular location is the cytoplasm. Specifically methylates the N7 position of a guanine in 16S rRNA. The sequence is that of Ribosomal RNA small subunit methyltransferase G from Synechococcus sp. (strain WH7803).